The sequence spans 232 residues: DNA repair and recombination protein RadB (232 aa).

It belongs to the eukaryotic RecA-like protein family. RadB subfamily.

Functionally, involved in DNA repair and in homologous recombination. May regulate the cleavage reactions of the branch-structured DNA. Has a very weak ATPase activity that is not stimulated by DNA. Binds DNA but does not promote DNA strands exchange. In Methanosphaera stadtmanae (strain ATCC 43021 / DSM 3091 / JCM 11832 / MCB-3), this protein is DNA repair and recombination protein RadB.